A 603-amino-acid chain; its full sequence is 65-kDa microtubule-associated protein 7 (603 aa).

Coiled-coil stretches lie at residues 48-79 (KECLEIYRRKVDEAANSKAQLHQSLVSIEAEI), 131-186 (DIKA…EKSD), and 468-502 (RLVSILEDYKLTRKQQEEEKRRYRDQKKMQDLLIK). The tract at residues 501–559 (IKRRESIYGSKPSPRRSNSVRKTNGYNGDASVPPTPRRNSAGATNNDIMTTPRSYSSHR) is disordered. The residue at position 513 (Ser513) is a Phosphoserine. 2 stretches are compositionally biased toward polar residues: residues 515–526 (RRSNSVRKTNGY) and 537–559 (RRNSAGATNNDIMTTPRSYSSHR). Ser599 carries the phosphoserine modification.

Belongs to the MAP65/ASE1 family. As to quaternary structure, forms dimer. Binds to microtubules (MT).

It is found in the nucleus. The protein localises to the cytoplasm. The protein resides in the cytoskeleton. Its subcellular location is the spindle pole. In Arabidopsis thaliana (Mouse-ear cress), this protein is 65-kDa microtubule-associated protein 7 (MAP65-7).